The sequence spans 133 residues: Ribonuclease P protein component (133 aa).

It belongs to the RnpA family. In terms of assembly, consists of a catalytic RNA component (M1 or rnpB) and a protein subunit.

It catalyses the reaction Endonucleolytic cleavage of RNA, removing 5'-extranucleotides from tRNA precursor.. Its function is as follows. RNaseP catalyzes the removal of the 5'-leader sequence from pre-tRNA to produce the mature 5'-terminus. It can also cleave other RNA substrates such as 4.5S RNA. The protein component plays an auxiliary but essential role in vivo by binding to the 5'-leader sequence and broadening the substrate specificity of the ribozyme. This is Ribonuclease P protein component from Pseudomonas putida (strain ATCC 47054 / DSM 6125 / CFBP 8728 / NCIMB 11950 / KT2440).